We begin with the raw amino-acid sequence, 843 residues long: Probable cleavage and polyadenylation specificity factor subunit 2 (843 aa).

Residues 414-425 (AEETRLRMERAR) show a composition bias toward basic and acidic residues. 2 disordered regions span residues 414 to 443 (AEET…DIAA) and 691 to 753 (DKNR…TKGK). The span at 432-441 (ESDDSDDDDI) shows a compositional bias: acidic residues. The span at 732 to 746 (SGKEVENGHTNDSRT) shows a compositional bias: basic and acidic residues.

Belongs to the metallo-beta-lactamase superfamily. RNA-metabolizing metallo-beta-lactamase-like family. CPSF2/YSH1 subfamily. As to quaternary structure, CPSF is a heterotetramer composed of four distinct subunits 160, 100, 70 and 30 kDa.

The protein resides in the nucleus. In terms of biological role, CPSF plays a key role in pre-mRNA 3'-end formation, recognizing the AAUAAA signal sequence and interacting with poly(A)polymerase and other factors to bring about cleavage and poly(A) addition. In Caenorhabditis elegans, this protein is Probable cleavage and polyadenylation specificity factor subunit 2 (cpsf-2).